Consider the following 391-residue polypeptide: ATP phosphoribosyltransferase regulatory subunit (391 aa).

It belongs to the class-II aminoacyl-tRNA synthetase family. HisZ subfamily. Heteromultimer composed of HisG and HisZ subunits.

It is found in the cytoplasm. It functions in the pathway amino-acid biosynthesis; L-histidine biosynthesis; L-histidine from 5-phospho-alpha-D-ribose 1-diphosphate: step 1/9. Functionally, required for the first step of histidine biosynthesis. May allow the feedback regulation of ATP phosphoribosyltransferase activity by histidine. In Prochlorococcus marinus (strain NATL2A), this protein is ATP phosphoribosyltransferase regulatory subunit.